The primary structure comprises 270 residues: uncharacterized protein (270 aa).

30 to 55 (ATGSLGRVAARALADAGARLTLAGGN) contributes to the NADP(+) binding site. Ser-157 lines the substrate pocket. Residue Tyr-171 is the Proton acceptor of the active site.

The protein belongs to the short-chain dehydrogenases/reductases (SDR) family.

This is an uncharacterized protein from Mycobacterium tuberculosis (strain CDC 1551 / Oshkosh).